The sequence spans 67 residues: MAVGTVKWFNAEKGYGFIAPEDNSADVFVHFSAIQGNGFKELQENDRVEFETQDGPKGLQAANVTKL.

Residues 4–64 form the CSD domain; it reads GTVKWFNAEK…GPKGLQAANV (61 aa).

It is found in the cytoplasm. The chain is Major cold shock protein (cspA) from Micrococcus luteus (strain ATCC 4698 / DSM 20030 / JCM 1464 / CCM 169 / CCUG 5858 / IAM 1056 / NBRC 3333 / NCIMB 9278 / NCTC 2665 / VKM Ac-2230) (Micrococcus lysodeikticus).